A 154-amino-acid chain; its full sequence is 3-hydroxyacyl-[acyl-carrier-protein] dehydratase FabZ (154 aa).

The active site involves histidine 58.

The protein belongs to the thioester dehydratase family. FabZ subfamily.

It localises to the cytoplasm. The enzyme catalyses a (3R)-hydroxyacyl-[ACP] = a (2E)-enoyl-[ACP] + H2O. Its function is as follows. Involved in unsaturated fatty acids biosynthesis. Catalyzes the dehydration of short chain beta-hydroxyacyl-ACPs and long chain saturated and unsaturated beta-hydroxyacyl-ACPs. The polypeptide is 3-hydroxyacyl-[acyl-carrier-protein] dehydratase FabZ (Protochlamydia amoebophila (strain UWE25)).